We begin with the raw amino-acid sequence, 69 residues long: Proteinase inhibitor (69 aa).

Ser-1 carries the N-acetylserine modification. Cysteines 4 and 49 form a disulfide.

Functionally, in vitro, strong inhibitor of bovine beta-trypsin, weak inhibitor of alpha-chymotrypsin, subtilisin BPN', subtilisin Carlsberg and cathepsin G. In Linum usitatissimum (Flax), this protein is Proteinase inhibitor.